The primary structure comprises 210 residues: ATP-dependent Clp protease proteolytic subunit (210 aa).

The Nucleophile role is filled by Ser113. The active site involves His138.

It belongs to the peptidase S14 family. In terms of assembly, fourteen ClpP subunits assemble into 2 heptameric rings which stack back to back to give a disk-like structure with a central cavity, resembling the structure of eukaryotic proteasomes.

Its subcellular location is the cytoplasm. The catalysed reaction is Hydrolysis of proteins to small peptides in the presence of ATP and magnesium. alpha-casein is the usual test substrate. In the absence of ATP, only oligopeptides shorter than five residues are hydrolyzed (such as succinyl-Leu-Tyr-|-NHMec, and Leu-Tyr-Leu-|-Tyr-Trp, in which cleavage of the -Tyr-|-Leu- and -Tyr-|-Trp bonds also occurs).. Functionally, cleaves peptides in various proteins in a process that requires ATP hydrolysis. Has a chymotrypsin-like activity. Plays a major role in the degradation of misfolded proteins. The sequence is that of ATP-dependent Clp protease proteolytic subunit from Marinomonas sp. (strain MWYL1).